The sequence spans 904 residues: Exo-beta-D-glucosaminidase (904 aa).

Positions Met1–Ala32 are cleaved as a signal peptide. The disordered stretch occupies residues Ala28–Gly49. Residue Asp476 is the Proton donor of the active site. The active-site Nucleophile is Glu545. Low complexity predominate over residues Ser813–Val828. The tract at residues Ser813–Ser833 is disordered.

It belongs to the glycosyl hydrolase 2 family. As to quaternary structure, monomer.

It is found in the secreted. It catalyses the reaction Hydrolysis of chitosan or chitosan oligosaccharides to remove successive D-glucosamine residues from the non-reducing termini.. Its function is as follows. Hydrolyzes chitosan and chitooligosaccharides with retention of anomeric configuration. Has no beta-mannosidase activity. This chain is Exo-beta-D-glucosaminidase, found in Streptomyces avermitilis (strain ATCC 31267 / DSM 46492 / JCM 5070 / NBRC 14893 / NCIMB 12804 / NRRL 8165 / MA-4680).